Here is a 62-residue protein sequence, read N- to C-terminus: Sperm protamine P1 (62 aa).

The disordered stretch occupies residues 1 to 62 (MARYRHSRSR…RYSRRRRRRY (62 aa)).

Belongs to the protamine P1 family. As to expression, testis.

It is found in the nucleus. Its subcellular location is the chromosome. Protamines substitute for histones in the chromatin of sperm during the haploid phase of spermatogenesis. They compact sperm DNA into a highly condensed, stable and inactive complex. The chain is Sperm protamine P1 (PRM1) from Dorcopsulus vanheurni (Lesser forest wallaby).